The primary structure comprises 608 residues: DNA mismatch repair protein MutL (608 aa).

The protein belongs to the DNA mismatch repair MutL/HexB family.

Its function is as follows. This protein is involved in the repair of mismatches in DNA. It is required for dam-dependent methyl-directed DNA mismatch repair. May act as a 'molecular matchmaker', a protein that promotes the formation of a stable complex between two or more DNA-binding proteins in an ATP-dependent manner without itself being part of a final effector complex. The chain is DNA mismatch repair protein MutL from Anaeromyxobacter dehalogenans (strain 2CP-C).